The primary structure comprises 209 residues: Chaperone protein TorD (209 aa).

Belongs to the TorD/DmsD family. TorD subfamily.

The protein localises to the cytoplasm. In terms of biological role, involved in the biogenesis of TorA. Acts on TorA before the insertion of the molybdenum cofactor and, as a result, probably favors a conformation of the apoenzyme that is competent for acquiring the cofactor. The chain is Chaperone protein TorD from Shewanella baltica (strain OS155 / ATCC BAA-1091).